Here is a 536-residue protein sequence, read N- to C-terminus: Thiamine transport system permease protein ThiP (536 aa).

The next 12 membrane-spanning stretches (helical) occupy residues 16–36 (GLCAAALMITVSLAAFLALWL), 58–78 (FSFWQAFLSAVLSVVPAVFLA), 95–115 (LCAMTLILPVLVAVFGILSVY), 134–154 (FSPYGLQGILLAHVFFNLPMA), 199–219 (VAALIFMLCFASFATVLSLGG), 240–260 (PARAAMLALIQMVCCLALVLL), 291–311 (DALLIVLALLLLLPPLVAVVV), 334–354 (SLRIALAAGVLCVVLTMMLLW), 373–393 (LSGMLILAMPGIVLATGFFLL), 404–424 (ADGIVIFTNALMAIPYALKVL), 463–483 (AQALAFACVLSIGDFGVVALF), and 506–526 (DGAVTALILLLLCFTLFTLIE). Residues 56–261 (VRFSFWQAFL…VCCLALVLLS (206 aa)) enclose the ABC transmembrane type-1 1 domain. Residues 331-525 (VWTSLRIALA…LLCFTLFTLI (195 aa)) enclose the ABC transmembrane type-1 2 domain.

It belongs to the binding-protein-dependent transport system permease family. In terms of assembly, the complex is composed of two ATP-binding proteins (ThiQ), two transmembrane proteins (ThiP) and a solute-binding protein (ThiB).

The protein localises to the cell inner membrane. Part of the ABC transporter complex ThiBPQ involved in thiamine import. Probably responsible for the translocation of the substrate across the membrane. Is also involved in thiamine pyrophosphate transport. In Salmonella typhimurium (strain LT2 / SGSC1412 / ATCC 700720), this protein is Thiamine transport system permease protein ThiP.